We begin with the raw amino-acid sequence, 316 residues long: Probable cell division protein WhiA (316 aa).

Residues 277–310 (SLEQLGRLADPPITKDAIAGRIRRLLQLAEKTEK) constitute a DNA-binding region (H-T-H motif).

Belongs to the WhiA family.

Involved in cell division and chromosome segregation. This chain is Probable cell division protein WhiA, found in Bifidobacterium adolescentis (strain ATCC 15703 / DSM 20083 / NCTC 11814 / E194a).